Reading from the N-terminus, the 81-residue chain is U-poneritoxin(01)-Om2a (81 aa).

Residues 1–25 (MKPSGITFAFLVVFMMAIMYNSVQA) form the signal peptide. Positions 26–47 (AAIADADADAEAKAFADAFAEA) are excised as a propeptide.

Belongs to the formicidae venom precursor-01 superfamily. In terms of processing, truncated sequences of this peptide have also been found in the venom. It is possible they have been cleaved in the venom. In terms of tissue distribution, expressed by the venom gland.

The protein resides in the secreted. Functionally, cationic amphipathic alpha-helical peptide with antimicrobial activities against E.coli (MIC=6.2 uM), S.aureus (MIC=6.2 uM), and S.cerevisiae (MIC=50 uM). Also shows histamine-releasing activity (30.1% at 10 uM) and a weak hemolytic activity (10.4% at 50 uM). The polypeptide is U-poneritoxin(01)-Om2a (Odontomachus monticola (Trap-jaw ant)).